Reading from the N-terminus, the 382-residue chain is 3-ketosteroid-9-alpha-monooxygenase, oxygenase component (382 aa).

Positions 20–122 constitute a Rieske domain; that stretch reads WHCLGLSRTF…TMEKHGQLFV (103 aa). 4 residues coordinate [2Fe-2S] cluster: Cys61, His63, Cys80, and His83. Fe cation is bound by residues Asn169, His175, His180, and Asp298.

In terms of assembly, homotrimer. The two-component system 3-ketosteroid-9-alpha-monooxygenase is composed of an oxygenase component KshA and a reductase component KshB. [2Fe-2S] cluster is required as a cofactor. Requires Fe cation as cofactor.

The enzyme catalyses androsta-1,4-diene-3,17-dione + 2 reduced [2Fe-2S]-[ferredoxin] + O2 + 2 H(+) = 9alpha-hydroxyandrosta-1,4-diene-3,17-dione + 2 oxidized [2Fe-2S]-[ferredoxin] + H2O. In vitro, catalyzes the introduction of a 9alpha-hydroxyl moiety into the ring B of 3-ketosteroid substrates such as 1,4-androstadiene-3,17-dione (ADD), 4-androstene-3,17-dione (AD), 4-androstene-17beta-ol-3-one (testosterone), 4-pregnene-3,20-dione (progesterone), 23,24-bisnorcholesta-4-ene-22-oate and 23,24-bisnorcholesta-1,4-diene-22-oate. This is 3-ketosteroid-9-alpha-monooxygenase, oxygenase component from Rhodococcus rhodochrous.